Consider the following 1216-residue polypeptide: RAB11-binding protein RELCH (1216 aa).

Over residues 1-13 the composition is skewed to gly residues; that stretch reads MAAMAPGGGGSGS. Disordered regions lie at residues 1–67 and 133–179; these read MAAM…GSSA and NPGN…NRAG. At alanine 2 the chain carries N-acetylalanine. 2 positions are modified to phosphoserine: serine 20 and serine 22. The segment covering 21-31 has biased composition (acidic residues); the sequence is DSDEDDDEVAA. Threonine 32 carries the post-translational modification Phosphothreonine. A phosphoserine mark is found at serine 54 and serine 56. Residues 142 to 154 show a composition bias toward low complexity; that stretch reads GTPPGMGAPGIPG. 2 positions are modified to phosphoserine: serine 180 and serine 182. The residue at position 183 (threonine 183) is a Phosphothreonine. The residue at position 186 (serine 186) is a Phosphoserine. Positions 197–231 form a coiled coil; sequence NRETDERVAVLEFELRKAKETIQALRANLTKAAEH. Residues 255–287 form the LisH domain; it reads EKRALNFLVNEFLLKNNYKLTSITFSDENDDQD. The stretch at 358–397 forms a coiled coil; the sequence is LVQKLEDKISLLNNEKWSLMEQIRRLESEMDILKAEHFAT. Phosphoserine is present on serine 385. Residues 409 to 473 are disordered; that stretch reads VWSSQKDSED…ELPPSSVSNK (65 aa). Positions 429–440 are enriched in basic and acidic residues; that stretch reads DQEKTKDVHLEI. Phosphoserine is present on serine 453. The tract at residues 497-779 is interaction with RAB11A and RAB11B; the sequence is CRMSADSRLG…SSKAKLHGEV (283 aa). HEAT repeat units lie at residues 601–639 and 640–679; these read LLPQCWEQINHKYPERRLLVAESCGALAPYLPKEIRSSL and VLSMLQQMLMEDKADLVREAVIKSLGIIMGYIDDPDKYQQ. The residue at position 792 (serine 792) is a Phosphoserine. An HEAT 3 repeat occupies 1004 to 1042; sequence VVPALITLSSDPEISVRIATIPAFGTIMETVIQRELLER. A Phosphoserine modification is found at serine 1149.

In terms of assembly, interacts with RAB11A (VIA-GTP form). Interacts with RAB11B. Interacts (via the third HEAT repeat) with OSBP (via C-terminus). Found in a complex composed of RELCH, OSBP1 and RAB11A.

Its subcellular location is the recycling endosome. It localises to the golgi apparatus. The protein resides in the trans-Golgi network. Regulates intracellular cholesterol distribution from recycling endosomes to the trans-Golgi network through interactions with RAB11 and OSBP. Functions in membrane tethering and promotes OSBP-mediated cholesterol transfer between RAB11-bound recycling endosomes and OSBP-bound Golgi-like membranes. The protein is RAB11-binding protein RELCH (Relch) of Mus musculus (Mouse).